We begin with the raw amino-acid sequence, 231 residues long: Ion-translocating oxidoreductase complex subunit E (231 aa).

6 helical membrane passes run 18 to 38 (ALVQLLGLCPLLAVTSTATNA), 39 to 59 (LGLGLATTLVLTLTNLTISTL), 63 to 83 (TPAEIRIPIYVMIIASVVSAV), 86 to 106 (LINAYAFGLYQSLGIFIPLIV), 125 to 145 (ALSALDGFSIGMGATCAMFVL), and 182 to 202 (PFLLAMLPPGAFIGLGLMLAG).

The protein belongs to the NqrDE/RnfAE family. As to quaternary structure, the complex is composed of six subunits: RsxA, RsxB, RsxC, RsxD, RsxE and RsxG.

The protein localises to the cell inner membrane. Its function is as follows. Part of a membrane-bound complex that couples electron transfer with translocation of ions across the membrane. Required to maintain the reduced state of SoxR. The protein is Ion-translocating oxidoreductase complex subunit E of Escherichia coli O6:H1 (strain CFT073 / ATCC 700928 / UPEC).